We begin with the raw amino-acid sequence, 238 residues long: Valine-rich protein (238 aa).

Residues 1-16 (MQAVLLVVALFGAALA) form the signal peptide.

As to expression, prismatic layer of shell (at protein level). Expressed primarily in the mantle with highest level in the mantle edge and lower level in the mantle pallium.

It is found in the secreted. This chain is Valine-rich protein, found in Pinctada maxima (Silver-lipped pearl oyster).